We begin with the raw amino-acid sequence, 397 residues long: Multidrug resistance protein MdtH (397 aa).

Transmembrane regions (helical) follow at residues 11–31 (WFLA…MPMI), 32–52 (SLRF…ALGL), 71–91 (FGAR…FASL), 94–114 (AQSG…GCLF), 137–157 (LLMM…SWLL), 163–183 (YVCL…LLIL), 211–231 (LVLI…IFPI), 242–262 (AVGW…YPLA), 291–311 (FANT…GIVI), 340–360 (LALG…YAML), and 366–386 (LPWL…VNCF).

This sequence belongs to the major facilitator superfamily. DHA1 family. MdtH (TC 2.A.1.2.21) subfamily.

It is found in the cell inner membrane. The polypeptide is Multidrug resistance protein MdtH (Aeromonas hydrophila subsp. hydrophila (strain ATCC 7966 / DSM 30187 / BCRC 13018 / CCUG 14551 / JCM 1027 / KCTC 2358 / NCIMB 9240 / NCTC 8049)).